Here is a 407-residue protein sequence, read N- to C-terminus: Probable endo-beta-1,4-glucanase celB (407 aa).

Residues 1–18 (MAQTLAAASLVLVPLVTA) form the signal peptide. N-linked (GlcNAc...) asparagine glycosylation is present at Asn136. Glu216 acts as the Nucleophile in catalysis. The active-site Proton donor is the Glu221.

This sequence belongs to the glycosyl hydrolase 7 (cellulase C) family.

The protein resides in the secreted. It catalyses the reaction Endohydrolysis of (1-&gt;4)-beta-D-glucosidic linkages in cellulose, lichenin and cereal beta-D-glucans.. Functionally, has endoglucanase activity on substrates containing beta-1,4 glycosidic bonds, like in carboxymethylcellulose (CMC), hydroxyethylcellulose (HEC) and beta-glucan. Involved in the degradation of complex natural cellulosic substrates. This Aspergillus fumigatus (strain ATCC MYA-4609 / CBS 101355 / FGSC A1100 / Af293) (Neosartorya fumigata) protein is Probable endo-beta-1,4-glucanase celB (celB).